Reading from the N-terminus, the 147-residue chain is MVEWTDSERAIINSIFSNLDYEEIGRKSLCRCLIVYPWTQRYFGGFGNLYNAETILCNPLIAAHGTKILHGLDRALKNMDDIKNTYAELSLLHSDKLHVDPDNFRLLADCLTGVIAAKMVPAFTVDTQVGWQKFRSFVVSALGREYH.

The region spanning 3-147 (EWTDSERAII…VVSALGREYH (145 aa)) is the Globin domain. 2 residues coordinate heme b: His64 and His93.

The protein belongs to the globin family. As to quaternary structure, heterotetramer of two alpha chains and two beta chains. In terms of tissue distribution, red blood cells.

Involved in oxygen transport from gills to the various peripheral tissues. The sequence is that of Hemoglobin subunit beta (hbb) from Gadus morhua (Atlantic cod).